Here is a 472-residue protein sequence, read N- to C-terminus: GTPase Der (472 aa).

EngA-type G domains follow at residues 3–166 (AVIA…PPAE) and 178–351 (IPVA…AAAH). Residues 9–16 (GRPNVGKS), 56–60 (DTGGM), 118–121 (NKTD), 184–191 (GRPNVGKS), 231–235 (DTAGV), and 296–299 (NKWD) contribute to the GTP site. The 85-residue stretch at 352–436 (RDLATPELND…PVRIECRASD (85 aa)) folds into the KH-like domain. The tract at residues 434–472 (ASDNPFADKPNQLTERQRRRRQRVIHHAKKREKKRKRRR) is disordered. Positions 450–472 (QRRRRQRVIHHAKKREKKRKRRR) are enriched in basic residues.

Belongs to the TRAFAC class TrmE-Era-EngA-EngB-Septin-like GTPase superfamily. EngA (Der) GTPase family. In terms of assembly, associates with the 50S ribosomal subunit.

Its function is as follows. GTPase that plays an essential role in the late steps of ribosome biogenesis. In Halorhodospira halophila (strain DSM 244 / SL1) (Ectothiorhodospira halophila (strain DSM 244 / SL1)), this protein is GTPase Der.